The following is a 490-amino-acid chain: Membrane-bound lytic murein transglycosylase F (490 aa).

A signal peptide spans 1-32 (MFALTAYRLRCAAWLLATGIFLLLAGCSEAKA). The tract at residues 33-269 (PTALERVQKE…RLKDRYYGHV (237 aa)) is non-LT domain. The segment at 270 to 490 (DVLGYVGAYT…PDDDEGDGKL (221 aa)) is LT domain. Glu316 is a catalytic residue. Residues 467–490 (AESGLHLPGVNKTRPDDDEGDGKL) are disordered.

It in the N-terminal section; belongs to the bacterial solute-binding protein 3 family. This sequence in the C-terminal section; belongs to the transglycosylase Slt family.

It is found in the cell outer membrane. It carries out the reaction Exolytic cleavage of the (1-&gt;4)-beta-glycosidic linkage between N-acetylmuramic acid (MurNAc) and N-acetylglucosamine (GlcNAc) residues in peptidoglycan, from either the reducing or the non-reducing ends of the peptidoglycan chains, with concomitant formation of a 1,6-anhydrobond in the MurNAc residue.. Its function is as follows. Murein-degrading enzyme that degrades murein glycan strands and insoluble, high-molecular weight murein sacculi, with the concomitant formation of a 1,6-anhydromuramoyl product. Lytic transglycosylases (LTs) play an integral role in the metabolism of the peptidoglycan (PG) sacculus. Their lytic action creates space within the PG sacculus to allow for its expansion as well as for the insertion of various structures such as secretion systems and flagella. The protein is Membrane-bound lytic murein transglycosylase F of Pseudomonas paraeruginosa (strain DSM 24068 / PA7) (Pseudomonas aeruginosa (strain PA7)).